A 252-amino-acid polypeptide reads, in one-letter code: Triosephosphate isomerase (252 aa).

Position 10–12 (10–12) interacts with substrate; the sequence is NWK. His-96 acts as the Electrophile in catalysis. The active-site Proton acceptor is Glu-168. Substrate is bound by residues Gly-174, Ser-214, and 235-236; that span reads GG.

The protein belongs to the triosephosphate isomerase family. As to quaternary structure, homodimer.

The protein localises to the cytoplasm. The enzyme catalyses D-glyceraldehyde 3-phosphate = dihydroxyacetone phosphate. It functions in the pathway carbohydrate biosynthesis; gluconeogenesis. Its pathway is carbohydrate degradation; glycolysis; D-glyceraldehyde 3-phosphate from glycerone phosphate: step 1/1. Its function is as follows. Involved in the gluconeogenesis. Catalyzes stereospecifically the conversion of dihydroxyacetone phosphate (DHAP) to D-glyceraldehyde-3-phosphate (G3P). The chain is Triosephosphate isomerase from Streptococcus pyogenes serotype M18 (strain MGAS8232).